We begin with the raw amino-acid sequence, 178 residues long: FXYD domain-containing ion transport regulator 5 (178 aa).

The N-terminal stretch at 1 to 21 is a signal peptide; sequence MSPPSQLCLLTIVALILPSEG. Residues 21-126 form a disordered region; that stretch reads GQTPEKPRSS…YMPPSYIENP (106 aa). Residues 22–146 are Extracellular-facing; the sequence is QTPEKPRSSF…YDNTTLRKRG (125 aa). The segment covering 29–58 has biased composition (polar residues); the sequence is SSFTAHQSSVTTHVPVPDQTSPGVQTTPPI. The span at 70-79 shows a compositional bias: low complexity; the sequence is QTAAKTKTQQ. The chain crosses the membrane as a helical span at residues 147–164; sequence LLVAAVLFITGIIILTSG. The Cytoplasmic segment spans residues 165 to 178; the sequence is KCRQFSQLCLNRHR.

It belongs to the FXYD family. As to quaternary structure, regulatory subunit of the sodium/potassium-transporting ATPase which is composed of a catalytic alpha subunit, a non-catalytic beta subunit and an additional regulatory subunit. The regulatory subunit, a member of the FXYD protein family, modulates the enzymatic activity in a tissue- and isoform-specific way by changing affinities of the Na+/K+-ATPase toward Na(+), K(+) or ATP. Post-translationally, glycosylated. Spleen, lung, skeletal muscle, and testis.

The protein localises to the cell membrane. It localises to the basolateral cell membrane. Its function is as follows. Associates with and regulates the activity of the sodium/potassium-transporting ATPase (NKA) which catalyzes the hydrolysis of ATP coupled with the exchange of Na(+) and K(+) ions across the plasma membrane. May increase NKA activity by increasing the apparent affinity for Na(+). Involved in down-regulation of E-cadherin which results in reduced cell adhesion. Promotes metastasis. The polypeptide is FXYD domain-containing ion transport regulator 5 (Fxyd5) (Rattus norvegicus (Rat)).